Consider the following 303-residue polypeptide: Type II methyltransferase M.MjaI (303 aa).

Belongs to the N(4)/N(6)-methyltransferase family. N(4) subfamily.

The catalysed reaction is a 2'-deoxycytidine in DNA + S-adenosyl-L-methionine = an N(4)-methyl-2'-deoxycytidine in DNA + S-adenosyl-L-homocysteine + H(+). Its function is as follows. A beta subtype methylase that recognizes the double-stranded sequence 5'-CTAG-3', methylates C-1 on both strands, and protects the DNA from cleavage by the MjaI endonuclease. The chain is Type II methyltransferase M.MjaI (mjaIM) from Methanocaldococcus jannaschii (strain ATCC 43067 / DSM 2661 / JAL-1 / JCM 10045 / NBRC 100440) (Methanococcus jannaschii).